Consider the following 463-residue polypeptide: Putative glycine--tRNA ligase, cytoplasmic (463 aa).

Residues 25–54 (TLEDSHAAKPETNAAIELPNKSKPEKSAVE) form a disordered region. Over residues 44 to 54 (NKSKPEKSAVE) the composition is skewed to basic and acidic residues. Substrate contacts are provided by Arg153 and Glu239. ATP is bound by residues 271–273 (RNE) and 281–286 (LRTREF). Residues 286-290 (FTLAE) and Asn376 contribute to the substrate site. 398–399 (EC) provides a ligand contact to ATP.

It belongs to the class-II aminoacyl-tRNA synthetase family. In terms of assembly, homodimer.

It is found in the cytoplasm. It catalyses the reaction tRNA(Gly) + glycine + ATP = glycyl-tRNA(Gly) + AMP + diphosphate. Its function is as follows. Catalyzes the attachment of glycine to tRNA(Gly). Is also able produce diadenosine tetraphosphate (Ap4A), a universal pleiotropic signaling molecule needed for cell regulation pathways, by direct condensation of 2 ATPs. This chain is Putative glycine--tRNA ligase, cytoplasmic, found in Arabidopsis thaliana (Mouse-ear cress).